The chain runs to 357 residues: Peptide chain release factor 1 (357 aa).

Glutamine 234 carries the N5-methylglutamine modification.

Belongs to the prokaryotic/mitochondrial release factor family. Methylated by PrmC. Methylation increases the termination efficiency of RF1.

It localises to the cytoplasm. Functionally, peptide chain release factor 1 directs the termination of translation in response to the peptide chain termination codons UAG and UAA. The sequence is that of Peptide chain release factor 1 from Alkaliphilus oremlandii (strain OhILAs) (Clostridium oremlandii (strain OhILAs)).